A 205-amino-acid chain; its full sequence is 2-dehydro-3-deoxy-6-phosphogalactonate aldolase (205 aa).

Arg-14 contacts 2-dehydro-3-deoxy-6-phospho-D-galactonate. The active-site Proton donor/acceptor is Glu-37. 2-dehydro-3-deoxy-6-phospho-D-galactonate contacts are provided by Thr-66, Lys-126, Gly-156, Gly-176, and Ser-177. The active-site Schiff-base intermediate with substrate is the Lys-126.

The protein belongs to the KHG/KDPG aldolase family. As to quaternary structure, homotrimer.

It carries out the reaction 2-dehydro-3-deoxy-6-phospho-D-galactonate = D-glyceraldehyde 3-phosphate + pyruvate. Its pathway is carbohydrate acid metabolism; D-galactonate degradation; D-glyceraldehyde 3-phosphate and pyruvate from D-galactonate: step 3/3. In terms of biological role, involved in the degradation of galactose via the DeLey-Doudoroff pathway. Catalyzes the reversible, stereospecific retro-aldol cleavage of 2-keto-3-deoxy-6-phosphogalactonate (KDPGal) to pyruvate and D-glyceraldehyde-3-phosphate. In the synthetic direction, it catalyzes the addition of pyruvate to electrophilic aldehydes with re-facial selectivity. It can use a limited number of aldehyde substrates, including D-glyceraldehyde-3-phosphate (natural substrate), D-glyceraldehyde, glycolaldehyde, 2-pyridinecarboxaldehyde, D-ribose, D-erythrose and D-threose. It efficiently catalyzes aldol addition only using pyruvate as the nucleophilic component and accepts both stereochemical configurations at C2 of the electrophile. The chain is 2-dehydro-3-deoxy-6-phosphogalactonate aldolase (dgoA) from Escherichia coli (strain K12).